The following is a 1157-amino-acid chain: DNA-directed RNA polymerase subunit beta (1157 aa).

It belongs to the RNA polymerase beta chain family. The RNAP catalytic core consists of 2 alpha, 1 beta, 1 beta' and 1 omega subunit. When a sigma factor is associated with the core the holoenzyme is formed, which can initiate transcription.

It catalyses the reaction RNA(n) + a ribonucleoside 5'-triphosphate = RNA(n+1) + diphosphate. Its function is as follows. DNA-dependent RNA polymerase catalyzes the transcription of DNA into RNA using the four ribonucleoside triphosphates as substrates. The chain is DNA-directed RNA polymerase subunit beta from Tropheryma whipplei (Whipple's bacillus).